The chain runs to 374 residues: UDP-N-acetylglucosamine--N-acetylmuramyl-(pentapeptide) pyrophosphoryl-undecaprenol N-acetylglucosamine transferase (374 aa).

UDP-N-acetyl-alpha-D-glucosamine-binding positions include 13-15, N124, R165, S193, and Q294; that span reads TGG.

The protein belongs to the glycosyltransferase 28 family. MurG subfamily.

Its subcellular location is the cell inner membrane. It carries out the reaction di-trans,octa-cis-undecaprenyl diphospho-N-acetyl-alpha-D-muramoyl-L-alanyl-D-glutamyl-meso-2,6-diaminopimeloyl-D-alanyl-D-alanine + UDP-N-acetyl-alpha-D-glucosamine = di-trans,octa-cis-undecaprenyl diphospho-[N-acetyl-alpha-D-glucosaminyl-(1-&gt;4)]-N-acetyl-alpha-D-muramoyl-L-alanyl-D-glutamyl-meso-2,6-diaminopimeloyl-D-alanyl-D-alanine + UDP + H(+). Its pathway is cell wall biogenesis; peptidoglycan biosynthesis. In terms of biological role, cell wall formation. Catalyzes the transfer of a GlcNAc subunit on undecaprenyl-pyrophosphoryl-MurNAc-pentapeptide (lipid intermediate I) to form undecaprenyl-pyrophosphoryl-MurNAc-(pentapeptide)GlcNAc (lipid intermediate II). This Sinorhizobium medicae (strain WSM419) (Ensifer medicae) protein is UDP-N-acetylglucosamine--N-acetylmuramyl-(pentapeptide) pyrophosphoryl-undecaprenol N-acetylglucosamine transferase.